Here is a 168-residue protein sequence, read N- to C-terminus: NADH-quinone oxidoreductase subunit B (168 aa).

Cysteine 49, cysteine 50, cysteine 114, and cysteine 144 together coordinate [4Fe-4S] cluster.

The protein belongs to the complex I 20 kDa subunit family. NDH-1 is composed of 14 different subunits. Subunits NuoB, C, D, E, F, and G constitute the peripheral sector of the complex. The cofactor is [4Fe-4S] cluster.

The protein resides in the cell membrane. It carries out the reaction a quinone + NADH + 5 H(+)(in) = a quinol + NAD(+) + 4 H(+)(out). Functionally, NDH-1 shuttles electrons from NADH, via FMN and iron-sulfur (Fe-S) centers, to quinones in the respiratory chain. Couples the redox reaction to proton translocation (for every two electrons transferred, four hydrogen ions are translocated across the cytoplasmic membrane), and thus conserves the redox energy in a proton gradient. The polypeptide is NADH-quinone oxidoreductase subunit B (Wolbachia pipientis wMel).